Consider the following 122-residue polypeptide: Phosphoribosyl-ATP pyrophosphatase (122 aa).

This sequence belongs to the PRA-PH family.

The protein resides in the cytoplasm. The enzyme catalyses 1-(5-phospho-beta-D-ribosyl)-ATP + H2O = 1-(5-phospho-beta-D-ribosyl)-5'-AMP + diphosphate + H(+). It functions in the pathway amino-acid biosynthesis; L-histidine biosynthesis; L-histidine from 5-phospho-alpha-D-ribose 1-diphosphate: step 2/9. This Burkholderia mallei (strain NCTC 10247) protein is Phosphoribosyl-ATP pyrophosphatase.